The sequence spans 368 residues: RNA polymerase sigma factor SigA (368 aa).

Positions Val60 to Asp86 are disordered. A compositionally biased stretch (basic and acidic residues) spans Pro67–Ala84. The tract at residues Leu135–Thr205 is sigma-70 factor domain-2. The short motif at Asp159–Gln162 is the Interaction with polymerase core subunit RpoC element. Positions Glu214–His290 are sigma-70 factor domain-3. Residues Val303–His356 are sigma-70 factor domain-4. Positions Leu329–Ala348 form a DNA-binding region, H-T-H motif.

It belongs to the sigma-70 factor family. RpoD/SigA subfamily. As to quaternary structure, interacts transiently with the RNA polymerase catalytic core.

The protein localises to the cytoplasm. Functionally, sigma factors are initiation factors that promote the attachment of RNA polymerase to specific initiation sites and are then released. This sigma factor is the primary sigma factor during exponential growth. In Enterococcus faecalis (strain ATCC 700802 / V583), this protein is RNA polymerase sigma factor SigA.